Reading from the N-terminus, the 243-residue chain is Proteasome subunit beta (243 aa).

The disordered stretch occupies residues 1–46 (MFNPNNGSEFARNRARLDDTPNPYEPEVGSLPEGDRSQAGSDTVNK). The propeptide at 1–48 (MFNPNNGSEFARNRARLDDTPNPYEPEVGSLPEGDRSQAGSDTVNKTG) is removed in mature form; by autocatalysis. Thr49 serves as the catalytic Nucleophile.

This sequence belongs to the peptidase T1B family. As to quaternary structure, the 20S proteasome core is composed of 14 alpha and 14 beta subunits that assemble into four stacked heptameric rings, resulting in a barrel-shaped structure. The two inner rings, each composed of seven catalytic beta subunits, are sandwiched by two outer rings, each composed of seven alpha subunits. The catalytic chamber with the active sites is on the inside of the barrel. Has a gated structure, the ends of the cylinder being occluded by the N-termini of the alpha-subunits. Is capped at one or both ends by the proteasome regulatory ATPase, PAN.

It is found in the cytoplasm. It carries out the reaction Cleavage of peptide bonds with very broad specificity.. Its activity is regulated as follows. The formation of the proteasomal ATPase PAN-20S proteasome complex, via the docking of the C-termini of PAN into the intersubunit pockets in the alpha-rings, triggers opening of the gate for substrate entry. Interconversion between the open-gate and close-gate conformations leads to a dynamic regulation of the 20S proteasome proteolysis activity. In terms of biological role, component of the proteasome core, a large protease complex with broad specificity involved in protein degradation. This Halobacterium salinarum (strain ATCC 29341 / DSM 671 / R1) protein is Proteasome subunit beta.